The sequence spans 408 residues: Acetate kinase (408 aa).

Residue Asn-7 coordinates Mg(2+). Lys-14 provides a ligand contact to ATP. A substrate-binding site is contributed by Arg-91. Catalysis depends on Asp-148, which acts as the Proton donor/acceptor. Residues 208 to 212 and 283 to 285 contribute to the ATP site; these read HLGNG and DLR. Glu-388 contacts Mg(2+).

This sequence belongs to the acetokinase family. In terms of assembly, homodimer. Mg(2+) is required as a cofactor. Requires Mn(2+) as cofactor.

It localises to the cytoplasm. The enzyme catalyses acetate + ATP = acetyl phosphate + ADP. It functions in the pathway metabolic intermediate biosynthesis; acetyl-CoA biosynthesis; acetyl-CoA from acetate: step 1/2. Catalyzes the formation of acetyl phosphate from acetate and ATP. Can also catalyze the reverse reaction. This chain is Acetate kinase, found in Borrelia hermsii (strain HS1 / DAH).